A 442-amino-acid polypeptide reads, in one-letter code: Prenyltransferase nscD (442 aa).

The protein belongs to the tryptophan dimethylallyltransferase family.

Its pathway is secondary metabolite biosynthesis. In terms of biological role, prenyltransferase; part of the gene cluster that mediates the biosynthesis of neosartoricin B, a prenylated anthracenone that probably exhibits T-cell antiproliferative activity, suggestive of a physiological role as an immunosuppressive agent. The non-reducing polyketide synthase nscA probably synthesizes and cyclizes the decaketide backbone. The hydrolase nscB then mediates the product release through hydrolysis followed by spontaneous decarboxylation. The prenyltransferase nscD catalyzes the addition of the dimethylallyl group to the aromatic C5. The FAD-dependent monooxygenase nscC is then responsible for the stereospecific hydroxylation at C2. Neosartoricin B can be converted into two additional compounds neosartoricins C and D. Neosartoricin C is a spirocyclic compound that is cyclized through the attack of C3 hydroxyl on C14, followed by dehydration. On the other hand, neosartoricin D is a further cyclized compound in which attack of C2 on C14 in neosartoricin C results in the formation of the acetal-containing dioxabicyclo-octanone ring. Both of these compounds are novel and possibly represent related metabolites of the gene cluster. In Trichophyton verrucosum (strain HKI 0517), this protein is Prenyltransferase nscD.